The following is a 378-amino-acid chain: UPF0284 protein MK0224 (378 aa).

Belongs to the UPF0284 family.

This Methanopyrus kandleri (strain AV19 / DSM 6324 / JCM 9639 / NBRC 100938) protein is UPF0284 protein MK0224.